Here is a 331-residue protein sequence, read N- to C-terminus: CMRF35-like molecule 9 (331 aa).

Residues 1-18 (MRPLVLLWGCLVLPGYEA) form the signal peptide. The region spanning 19-120 (LKGPKEISGF…LGRDESFEVT (102 aa)) is the Ig-like V-type domain. Residues 19-204 (LKGPKEISGF…KPSVSIPMVR (186 aa)) are Extracellular-facing. C37 and C106 form a disulfide bridge. T136 is a glycosylation site (O-linked (GalNAc...) threonine). O-linked (GalNAc...) serine glycosylation occurs at S140. The O-linked (GalNAc...) threonine glycan is linked to T143. Residue S145 is glycosylated (O-linked (GalNAc...) serine). T150 and T152 each carry an O-linked (GalNAc...) threonine glycan. O-linked (GalNAc...) serine glycosylation is present at S154. O-linked (GalNAc...) threonine glycosylation is found at T164, T181, and T182. O-linked (GalNAc...) serine glycosylation is present at S186. A helical membrane pass occupies residues 205–225 (MMAPVLILLSLLLAAGLIAFG). Residues 226 to 331 (SHMLRWRKKA…ELAFSEFISV (106 aa)) are Cytoplasmic-facing. The span at 278–293 (NPSAVPSPETQNLSQS) shows a compositional bias: polar residues. A disordered region spans residues 278–318 (NPSAVPSPETQNLSQSTEEEEAARSLDDDKEDVMAPPPLQM).

This sequence belongs to the CD300 family. Post-translationally, O-glycosylated with sialylated oligosaccharides. Expressed in monocyte cell lines. Expressed in certain types of endothelial and myeloid lineage cells. Expressed in mesenteric lymph nodes (LNs), spleen, thymus, lung, heart and kidney. Expressed in high endothelial venules (HEVs) in peripheral and mesenteric LNs (at protein level). Highly expressed in heart. Slightly expressed in spleen and thymus. Isoform 5 is expressed preferentially in heart. Isoform 1 is expressed predominantly in kidney and liver.

Its subcellular location is the apical cell membrane. It is found in the basolateral cell membrane. It localises to the endosome. The protein resides in the multivesicular body membrane. Receptor which may mediate L-selectin-dependent lymphocyte rollings. Binds SELL in a calcium dependent manner. Binds lymphocyte. The polypeptide is CMRF35-like molecule 9 (Cd300lg) (Mus musculus (Mouse)).